The sequence spans 281 residues: E2F-associated phosphoprotein (281 aa).

Met1 is modified (N-acetylmethionine). The disordered stretch occupies residues 1-27 (MNRLQDDYDPYAVEEPSDEEPALSSSE). A compositionally biased stretch (acidic residues) spans 15-27 (EPSDEEPALSSSE). The residue at position 17 (Ser17) is a Phosphoserine. At Thr37 the chain carries Phosphothreonine. 2 positions are modified to phosphoserine: Ser109 and Ser111. The disordered stretch occupies residues 222–245 (PENRRKRRSAKKMRSNPEDPAERE). Over residues 225–235 (RRKRRSAKKMR) the composition is skewed to basic residues. Residues 236 to 245 (SNPEDPAERE) are compositionally biased toward basic and acidic residues.

In terms of assembly, interacts with E2F1. The C-terminal half binds the N-terminal of E2F1. Also interacts with E2F2 and E2F3, but not E2F4.

The protein resides in the cytoplasm. Its subcellular location is the nucleus. In terms of biological role, may play an important role in the fine-tuning of both major E2F1 activities, the regulation of the cell-cycle and the induction of apoptosis. Promotes S-phase entry, and inhibits p14(ARP) expression. This is E2F-associated phosphoprotein (Eapp) from Mus musculus (Mouse).